The primary structure comprises 228 residues: Hematopoietically-expressed homeobox protein hhex (228 aa).

The homeobox DNA-binding region spans 117–176 (RKGGQVRFSNDQTIELEKKFETQKYLSPPERKRLAKMLQLSERQVKTWFQNRRAKWRRLK). A disordered region spans residues 175–228 (LKQENPPSTGKREAEDSDTRRLSDAAARARELESGASTDSEELLDIEDEHQFTL). The segment covering 184 to 207 (GKREAEDSDTRRLSDAAARARELE) has biased composition (basic and acidic residues). Positions 213-222 (DSEELLDIED) are enriched in acidic residues.

Expressed in embryonic endothelial and blood lineages. From late-blastula stage, expression is restricted to the dorsal marginal region of the extraembryonic yolk syncytial layer (YSL). By the onset of gastrulation, expressed in the entire dorsal half of the YSL. Post-gastrulation, expression appears in both anterior and posterior lateral plate mesoderm by the 3-somite stage. Posteriorly, expression is in the intermediate cell mass (ICM), which contains both endothelial and blood precursors. Subsequently expressed in the developing endothelial cells including the endocardium until the onset of circulation (24 hpf) and disappears completely by 30 hpf, at which point expression is seen in the thyroid and liver primordia. Also expressed in the developing biliary tree and pancreas.

It is found in the nucleus. In terms of biological role, recognizes the DNA sequence 5'-ATTAA-3'. Transcriptional repressor. Regulates the differentiation of both endothelial and blood cells. Plays a role in embryonic dorsoventral patterning by regulating bmp expression. May establish anterior identity. Functions in the embryo to regulate liver development. Functions extraembryonically to generate organ chirality. The polypeptide is Hematopoietically-expressed homeobox protein hhex (Danio rerio (Zebrafish)).